The primary structure comprises 271 residues: 4-hydroxy-tetrahydrodipicolinate reductase (271 aa).

10-15 (GAAGRM) contacts NAD(+). Arginine 37 is an NADP(+) binding site. Residues 100–102 (GTT) and 124–127 (SGNM) contribute to the NAD(+) site. Histidine 157 functions as the Proton donor/acceptor in the catalytic mechanism. Histidine 158 is a binding site for (S)-2,3,4,5-tetrahydrodipicolinate. Catalysis depends on lysine 161, which acts as the Proton donor. Position 167–168 (167–168 (GT)) interacts with (S)-2,3,4,5-tetrahydrodipicolinate. A disordered region spans residues 183–202 (SLSEHEQRGRDGHTGPRKDG). Over residues 185–202 (SEHEQRGRDGHTGPRKDG) the composition is skewed to basic and acidic residues.

Belongs to the DapB family.

The protein localises to the cytoplasm. It catalyses the reaction (S)-2,3,4,5-tetrahydrodipicolinate + NAD(+) + H2O = (2S,4S)-4-hydroxy-2,3,4,5-tetrahydrodipicolinate + NADH + H(+). It carries out the reaction (S)-2,3,4,5-tetrahydrodipicolinate + NADP(+) + H2O = (2S,4S)-4-hydroxy-2,3,4,5-tetrahydrodipicolinate + NADPH + H(+). The protein operates within amino-acid biosynthesis; L-lysine biosynthesis via DAP pathway; (S)-tetrahydrodipicolinate from L-aspartate: step 4/4. Catalyzes the conversion of 4-hydroxy-tetrahydrodipicolinate (HTPA) to tetrahydrodipicolinate. In Beijerinckia indica subsp. indica (strain ATCC 9039 / DSM 1715 / NCIMB 8712), this protein is 4-hydroxy-tetrahydrodipicolinate reductase.